We begin with the raw amino-acid sequence, 418 residues long: Tyrosine--tRNA ligase (418 aa).

Residue tyrosine 34 participates in L-tyrosine binding. The short motif at 39–48 (PTADSLHLGH) is the 'HIGH' region element. L-tyrosine-binding residues include tyrosine 169 and glutamine 173. Residues 229-233 (KFGKS) carry the 'KMSKS' region motif. Lysine 232 contacts ATP. One can recognise an S4 RNA-binding domain in the interval 352-418 (NNIVELLVSS…GKKKYFVLTY (67 aa)).

Belongs to the class-I aminoacyl-tRNA synthetase family. TyrS type 1 subfamily. As to quaternary structure, homodimer.

The protein localises to the cytoplasm. The catalysed reaction is tRNA(Tyr) + L-tyrosine + ATP = L-tyrosyl-tRNA(Tyr) + AMP + diphosphate + H(+). In terms of biological role, catalyzes the attachment of tyrosine to tRNA(Tyr) in a two-step reaction: tyrosine is first activated by ATP to form Tyr-AMP and then transferred to the acceptor end of tRNA(Tyr). This Streptococcus pneumoniae (strain ATCC BAA-255 / R6) protein is Tyrosine--tRNA ligase.